We begin with the raw amino-acid sequence, 390 residues long: Succinate--CoA ligase [ADP-forming] subunit beta (390 aa).

In terms of domain architecture, ATP-grasp spans 9–245 (KHLLKKYNIP…TTQEDEHETM (237 aa)). Residues Lys-46, 53 to 55 (GRG), Glu-99, Ser-102, and Glu-107 contribute to the ATP site. Mg(2+) is bound by residues Asn-200 and Asp-214. Substrate-binding positions include Asn-265 and 322-324 (GIV).

This sequence belongs to the succinate/malate CoA ligase beta subunit family. In terms of assembly, heterotetramer of two alpha and two beta subunits. It depends on Mg(2+) as a cofactor.

The catalysed reaction is succinate + ATP + CoA = succinyl-CoA + ADP + phosphate. It carries out the reaction GTP + succinate + CoA = succinyl-CoA + GDP + phosphate. Its pathway is carbohydrate metabolism; tricarboxylic acid cycle; succinate from succinyl-CoA (ligase route): step 1/1. In terms of biological role, succinyl-CoA synthetase functions in the citric acid cycle (TCA), coupling the hydrolysis of succinyl-CoA to the synthesis of either ATP or GTP and thus represents the only step of substrate-level phosphorylation in the TCA. The beta subunit provides nucleotide specificity of the enzyme and binds the substrate succinate, while the binding sites for coenzyme A and phosphate are found in the alpha subunit. This chain is Succinate--CoA ligase [ADP-forming] subunit beta, found in Coxiella burnetii (strain CbuG_Q212) (Coxiella burnetii (strain Q212)).